We begin with the raw amino-acid sequence, 278 residues long: Tryptophan synthase alpha chain (278 aa).

Active-site proton acceptor residues include Glu61 and Asp72.

The protein belongs to the TrpA family. Tetramer of two alpha and two beta chains.

The enzyme catalyses (1S,2R)-1-C-(indol-3-yl)glycerol 3-phosphate + L-serine = D-glyceraldehyde 3-phosphate + L-tryptophan + H2O. It participates in amino-acid biosynthesis; L-tryptophan biosynthesis; L-tryptophan from chorismate: step 5/5. Its function is as follows. The alpha subunit is responsible for the aldol cleavage of indoleglycerol phosphate to indole and glyceraldehyde 3-phosphate. The protein is Tryptophan synthase alpha chain of Shewanella oneidensis (strain ATCC 700550 / JCM 31522 / CIP 106686 / LMG 19005 / NCIMB 14063 / MR-1).